A 500-amino-acid chain; its full sequence is Cysteine-rich secretory protein LCCL domain-containing 1 (500 aa).

The N-terminal stretch at 1-23 is a signal peptide; the sequence is MKCTAREWLRVTTVLFMARAIPA. Residues 66 to 206 enclose the SCP domain; the sequence is LDLHNKLRSQ…PKAVYLVCNY (141 aa). The span at 254-280 shows a compositional bias: basic and acidic residues; sequence EETNEIERQQSQVHDTHVRTRSDDSSR. The segment at 254-281 is disordered; that stretch reads EETNEIERQQSQVHDTHVRTRSDDSSRN. 2 LCCL domains span residues 289-384 and 390-492; these read MSQI…ANSF and TVQA…PGGK. Cystine bridges form between Cys-295-Cys-313, Cys-317-Cys-337, Cys-396-Cys-418, and Cys-422-Cys-445.

This sequence belongs to the CRISP family.

Its subcellular location is the secreted. The sequence is that of Cysteine-rich secretory protein LCCL domain-containing 1 (CRISPLD1) from Homo sapiens (Human).